We begin with the raw amino-acid sequence, 315 residues long: 2-oxoglutarate and iron-dependent oxygenase domain-containing protein 3 (315 aa).

The disordered stretch occupies residues methionine 1–proline 32. The Cytoplasmic segment spans residues methionine 1–arginine 41. Over residues alanine 18–proline 32 the composition is skewed to basic and acidic residues. Residues isoleucine 42–isoleucine 62 form a helical; Signal-anchor for type II membrane protein membrane-spanning segment. The Lumenal portion of the chain corresponds to aspartate 63 to threonine 315. The region spanning lysine 203 to proline 305 is the Fe2OG dioxygenase domain. Asparagine 211 carries an N-linked (GlcNAc...) asparagine glycan. Histidine 226 and aspartate 228 together coordinate Fe cation. A glycan (N-linked (GlcNAc...) asparagine) is linked at asparagine 263. Histidine 284 is a binding site for Fe cation. The active site involves arginine 294. Arginine 294 is a 2-oxoglutarate binding site.

This sequence belongs to the OGFOD3 family. The cofactor is Fe(2+). L-ascorbate is required as a cofactor.

Its subcellular location is the membrane. The protein is 2-oxoglutarate and iron-dependent oxygenase domain-containing protein 3 (Ogfod3) of Rattus norvegicus (Rat).